A 588-amino-acid polypeptide reads, in one-letter code: L-fucose isomerase (588 aa).

Active-site proton acceptor residues include Glu335 and Asp359. Positions 335, 359, and 525 each coordinate Mn(2+).

This sequence belongs to the L-fucose isomerase family. Mn(2+) serves as cofactor.

The protein localises to the cytoplasm. The enzyme catalyses L-fucose = L-fuculose. It participates in carbohydrate degradation; L-fucose degradation; L-lactaldehyde and glycerone phosphate from L-fucose: step 1/3. Converts the aldose L-fucose into the corresponding ketose L-fuculose. In Streptococcus pneumoniae (strain Taiwan19F-14), this protein is L-fucose isomerase.